The following is a 433-amino-acid chain: MAQFYSAKRRTTTRQIITVSVNDLDSFGQGVARHNGKTLFIPGLLPQENAEVTVTEDKKQYARAKVVRRLSDSPERETPRCPHFGVCGGCQQQHASVDLQQRSKSAALARLMKHEVSEVIADVPWGYRRRARLSLNYLPKTQQLQMGFRKAGSSDIVDVKQCPILVPQLEALLPKVRACLGSLQAMRHLGHVELVQATSGTLMILRHTAPLSSADREKLECFSHSEGLDLYLAPDSEILETVSGEMPWYDSNGLRLTFSPRDFIQVNAGVNQKMVARALEWLDVEPEDRVLDLFCGMGNFTLPLATQAASVVGVEGVPALVEKGQQNARLNGLQNVTFYHENLEEDVTKQPWAKNGFDKVLLDPARAGAAGVMQQIIKLEPIRIVYVSCNPATLARDSEALLKAGYTIARLAMLDMFPHTGHLESMVLFSRVK.

The TRAM domain occupies 10–68 (RTTTRQIITVSVNDLDSFGQGVARHNGKTLFIPGLLPQENAEVTVTEDKKQYARAKVVR). Residues Cys81, Cys87, Cys90, and Cys162 each coordinate [4Fe-4S] cluster. Residues Gln265, Phe294, Asn299, Glu315, Asn342, and Asp363 each coordinate S-adenosyl-L-methionine. Cys389 acts as the Nucleophile in catalysis.

The protein belongs to the class I-like SAM-binding methyltransferase superfamily. RNA M5U methyltransferase family. RlmD subfamily.

The enzyme catalyses uridine(1939) in 23S rRNA + S-adenosyl-L-methionine = 5-methyluridine(1939) in 23S rRNA + S-adenosyl-L-homocysteine + H(+). Functionally, catalyzes the formation of 5-methyl-uridine at position 1939 (m5U1939) in 23S rRNA. This is 23S rRNA (uracil(1939)-C(5))-methyltransferase RlmD from Escherichia coli O6:K15:H31 (strain 536 / UPEC).